Reading from the N-terminus, the 74-residue chain is Somatostatin-2 (74 aa).

The propeptide occupies 1-46; that stretch reads ARGAGLLSQDWSAVEDLLAQMSLPEADAQREAEVVSVATGGRLNLE. A disulfide bridge links Cys63 with Cys74.

It belongs to the somatostatin family.

Its subcellular location is the secreted. Functionally, somatostatin inhibits the release of somatotropin. This is Somatostatin-2 (sst2) from Myoxocephalus scorpius (Shorthorn sculpin).